The chain runs to 145 residues: Large ribosomal subunit protein uL13 (145 aa).

The protein belongs to the universal ribosomal protein uL13 family. In terms of assembly, part of the 50S ribosomal subunit.

Its function is as follows. This protein is one of the early assembly proteins of the 50S ribosomal subunit, although it is not seen to bind rRNA by itself. It is important during the early stages of 50S assembly. The polypeptide is Large ribosomal subunit protein uL13 (Bacillus cereus (strain ZK / E33L)).